We begin with the raw amino-acid sequence, 143 residues long: Nucleoside diphosphate kinase (143 aa).

Residues Lys-11, Phe-59, Arg-87, Thr-93, Arg-104, and Asn-114 each contribute to the ATP site. The Pros-phosphohistidine intermediate role is filled by His-117.

This sequence belongs to the NDK family. Homotetramer. Requires Mg(2+) as cofactor.

Its subcellular location is the cytoplasm. It carries out the reaction a 2'-deoxyribonucleoside 5'-diphosphate + ATP = a 2'-deoxyribonucleoside 5'-triphosphate + ADP. The enzyme catalyses a ribonucleoside 5'-diphosphate + ATP = a ribonucleoside 5'-triphosphate + ADP. Functionally, major role in the synthesis of nucleoside triphosphates other than ATP. The ATP gamma phosphate is transferred to the NDP beta phosphate via a ping-pong mechanism, using a phosphorylated active-site intermediate. In Cronobacter sakazakii (strain ATCC BAA-894) (Enterobacter sakazakii), this protein is Nucleoside diphosphate kinase.